A 104-amino-acid polypeptide reads, in one-letter code: Sweet protein mabinlin-3 (104 aa).

Cystine bridges form between Cys-4-Cys-53, Cys-17-Cys-42, Cys-43-Cys-91, and Cys-55-Cys-99.

The protein belongs to the 2S seed storage albumins family. As to quaternary structure, heterodimer of a small A and a large B chain linked by disulfide bonds.

Its function is as follows. Heat stable 2S seed storage protein having sweetness-inducing activity. The protein is Sweet protein mabinlin-3 of Capparis masaikai (Mabinlang).